The following is a 432-amino-acid chain: Probable imidazolonepropionase (432 aa).

4-imidazolone-5-propanoate contacts are provided by Y159 and H192. An N-formimidoyl-L-glutamate-binding site is contributed by Y159. H260 serves as a coordination point for Fe(3+). Zn(2+) is bound at residue H260. E263 serves as a coordination point for 4-imidazolone-5-propanoate. D334 lines the Fe(3+) pocket. D334 provides a ligand contact to Zn(2+). An N-formimidoyl-L-glutamate-binding site is contributed by N336.

It belongs to the metallo-dependent hydrolases superfamily. HutI family. Requires Zn(2+) as cofactor. It depends on Fe(3+) as a cofactor.

It carries out the reaction 4-imidazolone-5-propanoate + H2O = N-formimidoyl-L-glutamate. It functions in the pathway amino-acid degradation; L-histidine degradation into L-glutamate; N-formimidoyl-L-glutamate from L-histidine: step 3/3. This Xenopus tropicalis (Western clawed frog) protein is Probable imidazolonepropionase (amdhd1).